Reading from the N-terminus, the 209-residue chain is GTP cyclohydrolase-2 (209 aa).

49 to 53 (RIHSE) contributes to the GTP binding site. Zn(2+)-binding residues include cysteine 54, cysteine 65, and cysteine 67. GTP contacts are provided by residues glutamine 70, 92–94 (EGR), and threonine 114. Aspartate 126 serves as the catalytic Proton acceptor. The active-site Nucleophile is arginine 128. Positions 149 and 154 each coordinate GTP.

This sequence belongs to the GTP cyclohydrolase II family. The cofactor is Zn(2+).

It catalyses the reaction GTP + 4 H2O = 2,5-diamino-6-hydroxy-4-(5-phosphoribosylamino)-pyrimidine + formate + 2 phosphate + 3 H(+). It functions in the pathway cofactor biosynthesis; riboflavin biosynthesis; 5-amino-6-(D-ribitylamino)uracil from GTP: step 1/4. Its function is as follows. Catalyzes the conversion of GTP to 2,5-diamino-6-ribosylamino-4(3H)-pyrimidinone 5'-phosphate (DARP), formate and pyrophosphate. The sequence is that of GTP cyclohydrolase-2 from Shewanella pealeana (strain ATCC 700345 / ANG-SQ1).